The sequence spans 320 residues: MRSAQVYRWQIPMDAGVVLRDRRLKTRDGLYVCLRDGEREGWGEISPLPGFSQETWEEAQTALLTWVNDWLQGSEGLPEMPSVAFGASCALAELTGVLPEAADYRAAPLCTGDPDDLVLRLADMPGEKIAKVKVGLYEAVRDGMVVNLLLEAIPDLHLRLDANRAWTPLKAQQFAKYVNPDYRARIAFLEEPCKTRDDSRAFARETGIAIAWDESLREADFTFEAEEGVRAVVIKPTLTGSLDKVREQVAAAHALGLTAVISSSIESSLGLTQLARIAAWLTPGTLPGLDTLHLMQAQQIRPWPGNALPCLKRDELERLL.

Lys-133 serves as the catalytic Proton donor. Positions 161, 190, and 213 each coordinate Mg(2+). The Proton acceptor role is filled by Lys-235.

Belongs to the mandelate racemase/muconate lactonizing enzyme family. MenC type 1 subfamily. A divalent metal cation is required as a cofactor.

The catalysed reaction is (1R,6R)-6-hydroxy-2-succinyl-cyclohexa-2,4-diene-1-carboxylate = 2-succinylbenzoate + H2O. It functions in the pathway quinol/quinone metabolism; 1,4-dihydroxy-2-naphthoate biosynthesis; 1,4-dihydroxy-2-naphthoate from chorismate: step 4/7. It participates in quinol/quinone metabolism; menaquinone biosynthesis. Converts 2-succinyl-6-hydroxy-2,4-cyclohexadiene-1-carboxylate (SHCHC) to 2-succinylbenzoate (OSB). The chain is o-succinylbenzoate synthase from Salmonella paratyphi A (strain ATCC 9150 / SARB42).